We begin with the raw amino-acid sequence, 575 residues long: MLHSQKRIWKKIGLCLLSFILGITVFTGSFGSKAEAAVAGDFQVSVMGPLAKVTDWNSFKNQLTTLKNNGVYAITTDVWWGYVESAGDNQFDWSYYKTYADTVKQAGLKWVPIISTHRCGGNVGDDCNIPLPSWLWSKGSADEMQFKDESGYVNNESLSPFWSGVGKQYDELYASFAQNFSAYKDMIPKIYLSGGPSGELRYPSYYPAAGWSYPARGKFQVYTETAKSAFRTAMTTKYGSLDKINAAWGTNLTSMSQISPPTDSDGFYTGGGYNITYGKDFLSWYQSVLENHLGVIGAAAHKNFDPVFGVRIGAKISGIHWQMNNPSMPHSAEHAGGYYDYNRLIQKFKDTDLDLTFTALEMYDSGTAPNYSLPSTLVDTVSSIANSKGVRLNGENALPTGGSGFQKIEEKITRFGYNGFTLLRINNIVNSDGSPTAEMSSFKNYVIKHAKPAGDGGGNPVNSVTIYYKKGFNSPYIHYRPAGGTWTDVPGVKMPDSEISGYAKITLDIGSASQLEAAFNDGNNQWDSNNMRNYFFSPGTSTYIPGTNGTAGSIQAGPPITSSDFQALPAYEMSI.

The first 36 residues, 1–36, serve as a signal peptide directing secretion; sequence MLHSQKRIWKKIGLCLLSFILGITVFTGSFGSKAEA. Asp77 contributes to the substrate binding site. 2 residues coordinate Ca(2+): Glu84 and Asp88. Substrate-binding residues include His117 and Asp125. Cys119 and Cys127 are oxidised to a cystine. A Ca(2+)-binding site is contributed by Glu171. Glu199 serves as the catalytic Proton donor. The substrate site is built by Lys315, His320, and Thr358. The active-site Proton acceptor is Glu395. Substrate contacts are provided by residues 396–397 and Arg424; that span reads NA.

It belongs to the glycosyl hydrolase 14 family. Monomer. The cofactor is Ca(2+).

The catalysed reaction is Hydrolysis of (1-&gt;4)-alpha-D-glucosidic linkages in polysaccharides so as to remove successive maltose units from the non-reducing ends of the chains.. The chain is Beta-amylase from Niallia circulans (Bacillus circulans).